A 290-amino-acid polypeptide reads, in one-letter code: Release factor glutamine methyltransferase (290 aa).

2 residues coordinate S-adenosyl-L-methionine: Asp-140 and Asn-181. 181 to 184 provides a ligand contact to substrate; that stretch reads NPPY.

It belongs to the protein N5-glutamine methyltransferase family. PrmC subfamily.

The enzyme catalyses L-glutaminyl-[peptide chain release factor] + S-adenosyl-L-methionine = N(5)-methyl-L-glutaminyl-[peptide chain release factor] + S-adenosyl-L-homocysteine + H(+). Its function is as follows. Methylates the class 1 translation termination release factors RF1/PrfA and RF2/PrfB on the glutamine residue of the universally conserved GGQ motif. This Chlamydia trachomatis serovar D (strain ATCC VR-885 / DSM 19411 / UW-3/Cx) protein is Release factor glutamine methyltransferase.